A 609-amino-acid chain; its full sequence is Arginine--tRNA ligase (609 aa).

A 'HIGH' region motif is present at residues 114 to 124 (VNPNKELHVGH).

Belongs to the class-I aminoacyl-tRNA synthetase family. As to quaternary structure, monomer.

The protein resides in the cytoplasm. It carries out the reaction tRNA(Arg) + L-arginine + ATP = L-arginyl-tRNA(Arg) + AMP + diphosphate. The sequence is that of Arginine--tRNA ligase from Deinococcus radiodurans (strain ATCC 13939 / DSM 20539 / JCM 16871 / CCUG 27074 / LMG 4051 / NBRC 15346 / NCIMB 9279 / VKM B-1422 / R1).